The following is a 193-amino-acid chain: dCTP deaminase (193 aa).

DCTP-binding positions include 110–115, D128, 136–138, Y171, K178, and Q182; these read RSSLAR and VLE. E138 functions as the Proton donor/acceptor in the catalytic mechanism. The disordered stretch occupies residues 169–193; sequence RPYNRREDAKYRNQQGAVASRIDKD.

It belongs to the dCTP deaminase family. As to quaternary structure, homotrimer.

It catalyses the reaction dCTP + H2O + H(+) = dUTP + NH4(+). It functions in the pathway pyrimidine metabolism; dUMP biosynthesis; dUMP from dCTP (dUTP route): step 1/2. Its function is as follows. Catalyzes the deamination of dCTP to dUTP. This Sodalis glossinidius (strain morsitans) protein is dCTP deaminase.